A 342-amino-acid polypeptide reads, in one-letter code: MREDYLKSDDEQFTSGEKEIERALRPLSFDDFAGQDKILENLKIFVGAAKQRGEPLDHVLLHGPPGLGKTTLSNIISNELNSNIKITSGPVLEKPGDLAGLLTNLQTNDVLFIDEIHRLNSVVEEYLYSAMEDYKIDIMLDSGANARSIQIGLNPFTLIGATTRAGLLTSPLRARFGINARLEYYDAKLLTRIVQRSSDLLNTPILETAAFEIARRSRGTPRIANNLLRRTRDFAQIKGDGTITLEIARIALQALNVDHNGLDDMDNRILTTIIDKFKGGPVGLSTIATAVSEEAETIEEVYEPFLIQEGYLKRTSRGREVTPLAYKHLQRTPPAQSGTLFE.

Residues 1–185 (MREDYLKSDD…FGINARLEYY (185 aa)) form a large ATPase domain (RuvB-L) region. ATP contacts are provided by residues L24, R25, G66, K69, T70, T71, 132 to 134 (EDY), R175, Y185, and R222. T70 contributes to the Mg(2+) binding site. A small ATPAse domain (RuvB-S) region spans residues 186–256 (DAKLLTRIVQ…IARIALQALN (71 aa)). The head domain (RuvB-H) stretch occupies residues 259–342 (HNGLDDMDNR…PPAQSGTLFE (84 aa)). Residues R314 and R319 each contribute to the DNA site.

The protein belongs to the RuvB family. As to quaternary structure, homohexamer. Forms an RuvA(8)-RuvB(12)-Holliday junction (HJ) complex. HJ DNA is sandwiched between 2 RuvA tetramers; dsDNA enters through RuvA and exits via RuvB. An RuvB hexamer assembles on each DNA strand where it exits the tetramer. Each RuvB hexamer is contacted by two RuvA subunits (via domain III) on 2 adjacent RuvB subunits; this complex drives branch migration. In the full resolvosome a probable DNA-RuvA(4)-RuvB(12)-RuvC(2) complex forms which resolves the HJ.

It is found in the cytoplasm. The catalysed reaction is ATP + H2O = ADP + phosphate + H(+). Functionally, the RuvA-RuvB-RuvC complex processes Holliday junction (HJ) DNA during genetic recombination and DNA repair, while the RuvA-RuvB complex plays an important role in the rescue of blocked DNA replication forks via replication fork reversal (RFR). RuvA specifically binds to HJ cruciform DNA, conferring on it an open structure. The RuvB hexamer acts as an ATP-dependent pump, pulling dsDNA into and through the RuvAB complex. RuvB forms 2 homohexamers on either side of HJ DNA bound by 1 or 2 RuvA tetramers; 4 subunits per hexamer contact DNA at a time. Coordinated motions by a converter formed by DNA-disengaged RuvB subunits stimulates ATP hydrolysis and nucleotide exchange. Immobilization of the converter enables RuvB to convert the ATP-contained energy into a lever motion, pulling 2 nucleotides of DNA out of the RuvA tetramer per ATP hydrolyzed, thus driving DNA branch migration. The RuvB motors rotate together with the DNA substrate, which together with the progressing nucleotide cycle form the mechanistic basis for DNA recombination by continuous HJ branch migration. Branch migration allows RuvC to scan DNA until it finds its consensus sequence, where it cleaves and resolves cruciform DNA. The chain is Holliday junction branch migration complex subunit RuvB from Cytophaga hutchinsonii (strain ATCC 33406 / DSM 1761 / CIP 103989 / NBRC 15051 / NCIMB 9469 / D465).